A 280-amino-acid polypeptide reads, in one-letter code: 4-diphosphocytidyl-2-C-methyl-D-erythritol kinase (280 aa).

Residue Lys8 is part of the active site. An ATP-binding site is contributed by 91-101; it reads PVAAGLAGGSA. Residue Asp133 is part of the active site.

Belongs to the GHMP kinase family. IspE subfamily.

It carries out the reaction 4-CDP-2-C-methyl-D-erythritol + ATP = 4-CDP-2-C-methyl-D-erythritol 2-phosphate + ADP + H(+). Its pathway is isoprenoid biosynthesis; isopentenyl diphosphate biosynthesis via DXP pathway; isopentenyl diphosphate from 1-deoxy-D-xylulose 5-phosphate: step 3/6. In terms of biological role, catalyzes the phosphorylation of the position 2 hydroxy group of 4-diphosphocytidyl-2C-methyl-D-erythritol. In Clostridium acetobutylicum (strain ATCC 824 / DSM 792 / JCM 1419 / IAM 19013 / LMG 5710 / NBRC 13948 / NRRL B-527 / VKM B-1787 / 2291 / W), this protein is 4-diphosphocytidyl-2-C-methyl-D-erythritol kinase.